The following is a 526-amino-acid chain: Peptide chain release factor 3 (526 aa).

The 270-residue stretch at 8-277 (NKRRTFAIIS…GLTQWAPAPQ (270 aa)) folds into the tr-type G domain. GTP is bound by residues 17 to 24 (SHPDAGKT), 85 to 89 (DTPGH), and 139 to 142 (NKLD).

The protein belongs to the TRAFAC class translation factor GTPase superfamily. Classic translation factor GTPase family. PrfC subfamily.

The protein resides in the cytoplasm. Increases the formation of ribosomal termination complexes and stimulates activities of RF-1 and RF-2. It binds guanine nucleotides and has strong preference for UGA stop codons. It may interact directly with the ribosome. The stimulation of RF-1 and RF-2 is significantly reduced by GTP and GDP, but not by GMP. This chain is Peptide chain release factor 3, found in Histophilus somni (strain 2336) (Haemophilus somnus).